Here is a 693-residue protein sequence, read N- to C-terminus: Elongation factor G (693 aa).

The tr-type G domain occupies 8–282; that stretch reads KNTRNIGIMA…AVIDYLPSPL (275 aa). GTP is bound by residues 17 to 24, 81 to 85, and 135 to 138; these read AHIDAGKT, DTPGH, and NKMD.

It belongs to the TRAFAC class translation factor GTPase superfamily. Classic translation factor GTPase family. EF-G/EF-2 subfamily.

The protein localises to the cytoplasm. Its function is as follows. Catalyzes the GTP-dependent ribosomal translocation step during translation elongation. During this step, the ribosome changes from the pre-translocational (PRE) to the post-translocational (POST) state as the newly formed A-site-bound peptidyl-tRNA and P-site-bound deacylated tRNA move to the P and E sites, respectively. Catalyzes the coordinated movement of the two tRNA molecules, the mRNA and conformational changes in the ribosome. The polypeptide is Elongation factor G (Staphylococcus epidermidis (strain ATCC 35984 / DSM 28319 / BCRC 17069 / CCUG 31568 / BM 3577 / RP62A)).